Here is a 97-residue protein sequence, read N- to C-terminus: YcgL domain-containing protein PputW619_3899 (97 aa).

A YcgL domain is found at 3-87; that stretch reads RICSIYKSPR…AEDEYIEHLP (85 aa).

The chain is YcgL domain-containing protein PputW619_3899 from Pseudomonas putida (strain W619).